The primary structure comprises 196 residues: Peptide deformylase (196 aa).

The Fe cation site is built by cysteine 97 and histidine 139. Glutamate 140 is an active-site residue. A Fe cation-binding site is contributed by histidine 143. Basic and acidic residues predominate over residues 171–187 (LDAQEPKRAPHSPHTDA). Positions 171–196 (LDAQEPKRAPHSPHTDAQKPGAASDL) are disordered.

Belongs to the polypeptide deformylase family. Requires Fe(2+) as cofactor.

The enzyme catalyses N-terminal N-formyl-L-methionyl-[peptide] + H2O = N-terminal L-methionyl-[peptide] + formate. Removes the formyl group from the N-terminal Met of newly synthesized proteins. Requires at least a dipeptide for an efficient rate of reaction. N-terminal L-methionine is a prerequisite for activity but the enzyme has broad specificity at other positions. The polypeptide is Peptide deformylase (Methylocella silvestris (strain DSM 15510 / CIP 108128 / LMG 27833 / NCIMB 13906 / BL2)).